Here is a 128-residue protein sequence, read N- to C-terminus: Small ribosomal subunit protein uS9 (128 aa).

Residues 107–128 (RAVERKKPGRPKARKRFQFSKR) are disordered. The span at 113 to 128 (KPGRPKARKRFQFSKR) shows a compositional bias: basic residues.

The protein belongs to the universal ribosomal protein uS9 family.

The chain is Small ribosomal subunit protein uS9 from Parabacteroides distasonis (strain ATCC 8503 / DSM 20701 / CIP 104284 / JCM 5825 / NCTC 11152).